Reading from the N-terminus, the 1173-residue chain is Eukaryotic translation initiation factor 3 subunit A (1173 aa).

Residues 319-502 (LQRMAAHVLL…NSIYFGTDLT (184 aa)) enclose the PCI domain. Disordered regions lie at residues 589–613 (QNNA…LAEQ) and 836–1173 (AAEA…PVQL). 4 stretches are compositionally biased toward basic and acidic residues: residues 836–900 (AAEA…RGGD), 925–1011 (DRNE…EPDS), 1028–1081 (SRDD…DAAP), and 1090–1125 (DAPR…RAPK). Residues 1128–1142 (GPSGGTGTAAGGGGN) are compositionally biased toward gly residues. Over residues 1149-1165 (PRDEPAPKRDQPQDKGK) the composition is skewed to basic and acidic residues.

It belongs to the eIF-3 subunit A family. In terms of assembly, component of the eukaryotic translation initiation factor 3 (eIF-3) complex. The eIF-3 complex interacts with pix.

The protein resides in the cytoplasm. Functionally, RNA-binding component of the eukaryotic translation initiation factor 3 (eIF-3) complex, which is involved in protein synthesis of a specialized repertoire of mRNAs and, together with other initiation factors, stimulates binding of mRNA and methionyl-tRNAi to the 40S ribosome. The eIF-3 complex specifically targets and initiates translation of a subset of mRNAs involved in cell proliferation. This Drosophila persimilis (Fruit fly) protein is Eukaryotic translation initiation factor 3 subunit A.